The primary structure comprises 428 residues: Probable G-protein coupled receptor (428 aa).

At 1-46 (MMADKTSPMITSDHSISNFSTGLFGPHPTVPPDVGVVTSSQSQMKD) the chain is on the extracellular side. An N-linked (GlcNAc...) asparagine glycan is attached at N18. The chain crosses the membrane as a helical span at residues 47–67 (LFGLFCMVTLNLIALLANTGV). The Cytoplasmic segment spans residues 68 to 93 (MVAIARAPHLKKFAFVCHLCAVDVLC). A helical transmembrane segment spans residues 94-114 (AILLMPLGIISSSPFFGTVVF). Over 115–120 (TILECQ) the chain is Extracellular. A helical transmembrane segment spans residues 121–141 (VYIFLNVFLIWLSILTITAIS). The Cytoplasmic portion of the chain corresponds to 142 to 162 (VERYFYIVHPMRYEVKMTINL). Residues 163–183 (VIGVMLLIWFKSLLLALVTLF) form a helical membrane-spanning segment. Over 184–210 (GWPPYGHQSSIAASHCSLHASHSRLRG) the chain is Extracellular. Residues 211 to 231 (VFAVLFCVICFLAPVVVIFSV) traverse the membrane as a helical segment. Over 232 to 293 (YSAVYKVARS…PERAFSGGKA (62 aa)) the chain is Cytoplasmic. The helical transmembrane segment at 294–314 (ALTLAFIVGQFLVCWLPFFIF) threads the bilayer. The Extracellular segment spans residues 315 to 428 (HLQMSLTGSM…IPGQIPEEQA (114 aa)). Over residues 398–414 (SETHPSFANSNPRNMEN) the composition is skewed to polar residues. Residues 398–428 (SETHPSFANSNPRNMENQAHKIPGQIPEEQA) form a disordered region.

It belongs to the G-protein coupled receptor 1 family.

Its subcellular location is the cell membrane. In Oryzias latipes (Japanese rice fish), this protein is Probable G-protein coupled receptor.